Consider the following 929-residue polypeptide: Protein unc-45 homolog A (929 aa).

TPR repeat units lie at residues 6–39 (VEQLRKEGNELFKCGDYGGALAAYTQALGLDATP), 43–76 (AVLHRNRAACYLKLEDYDKAETEASKAIEKDGGD), and 77–110 (VKALYRRSQALEKLGRLDQAVLDLQRCVSLEPKN). K55 bears the N6-acetyllysine mark. Residue K468 is modified to N6-acetyllysine.

In terms of assembly, interacts with PGR isoforms A and B as well as with NR3C1 in the absence of ligand, and with HSP90AB1. Binding to HSP90AB1 involves 2 UNC45A monomers per HSP90AB1 dimer.

Its subcellular location is the cytoplasm. The protein localises to the perinuclear region. It localises to the nucleus. Functionally, may act as co-chaperone for HSP90 (Potential). Prevents the stimulation of HSP90AB1 ATPase activity by AHSA1. Positive factor in promoting PGR function in the cell. May be necessary for proper folding of myosin (Potential). Necessary for normal cell proliferation. Necessary for normal myotube formation and myosin accumulation during muscle cell development. May play a role in erythropoiesis in stroma cells in the spleen. This is Protein unc-45 homolog A (UNC45A) from Pongo abelii (Sumatran orangutan).